The following is a 34-amino-acid chain: Protein MgtT (34 aa).

The tract at residues 1-34 (MNGDNPSPNRPLVTVVYKGPDFYDGEKKPPVNRR) is disordered. The segment covering 24–34 (DGEKKPPVNRR) has biased composition (basic and acidic residues).

In Escherichia coli (strain K12), this protein is Protein MgtT.